The following is a 357-amino-acid chain: UDP-N-acetylglucosamine--N-acetylmuramyl-(pentapeptide) pyrophosphoryl-undecaprenol N-acetylglucosamine transferase (357 aa).

UDP-N-acetyl-alpha-D-glucosamine-binding positions include 15 to 17, Asn-125, Ser-190, and Gln-290; that span reads SGG.

The protein belongs to the glycosyltransferase 28 family. MurG subfamily.

Its subcellular location is the cell inner membrane. The enzyme catalyses di-trans,octa-cis-undecaprenyl diphospho-N-acetyl-alpha-D-muramoyl-L-alanyl-D-glutamyl-meso-2,6-diaminopimeloyl-D-alanyl-D-alanine + UDP-N-acetyl-alpha-D-glucosamine = di-trans,octa-cis-undecaprenyl diphospho-[N-acetyl-alpha-D-glucosaminyl-(1-&gt;4)]-N-acetyl-alpha-D-muramoyl-L-alanyl-D-glutamyl-meso-2,6-diaminopimeloyl-D-alanyl-D-alanine + UDP + H(+). It functions in the pathway cell wall biogenesis; peptidoglycan biosynthesis. Functionally, cell wall formation. Catalyzes the transfer of a GlcNAc subunit on undecaprenyl-pyrophosphoryl-MurNAc-pentapeptide (lipid intermediate I) to form undecaprenyl-pyrophosphoryl-MurNAc-(pentapeptide)GlcNAc (lipid intermediate II). This is UDP-N-acetylglucosamine--N-acetylmuramyl-(pentapeptide) pyrophosphoryl-undecaprenol N-acetylglucosamine transferase from Chlamydia pneumoniae (Chlamydophila pneumoniae).